The sequence spans 437 residues: tRNA-2-methylthio-N(6)-dimethylallyladenosine synthase (437 aa).

The region spanning 1–117 (MKFYIKTFGC…LPNLLEEAKS (117 aa)) is the MTTase N-terminal domain. Residues cysteine 10, cysteine 46, cysteine 80, cysteine 156, cysteine 160, and cysteine 163 each contribute to the [4Fe-4S] cluster site. In terms of domain architecture, Radical SAM core spans 142–371 (RENKYTAFVT…INLQKDITFK (230 aa)). The 62-residue stretch at 374–435 (LEYQDKIVEI…RFSLEGSIIG (62 aa)) folds into the TRAM domain.

Belongs to the methylthiotransferase family. MiaB subfamily. As to quaternary structure, monomer. It depends on [4Fe-4S] cluster as a cofactor.

It localises to the cytoplasm. It catalyses the reaction N(6)-dimethylallyladenosine(37) in tRNA + (sulfur carrier)-SH + AH2 + 2 S-adenosyl-L-methionine = 2-methylsulfanyl-N(6)-dimethylallyladenosine(37) in tRNA + (sulfur carrier)-H + 5'-deoxyadenosine + L-methionine + A + S-adenosyl-L-homocysteine + 2 H(+). In terms of biological role, catalyzes the methylthiolation of N6-(dimethylallyl)adenosine (i(6)A), leading to the formation of 2-methylthio-N6-(dimethylallyl)adenosine (ms(2)i(6)A) at position 37 in tRNAs that read codons beginning with uridine. This Sulfurihydrogenibium sp. (strain YO3AOP1) protein is tRNA-2-methylthio-N(6)-dimethylallyladenosine synthase.